The primary structure comprises 259 residues: Undecaprenyl-diphosphatase 4 (259 aa).

8 helical membrane-spanning segments follow: residues 1 to 21 (MNWLEAFILGIIQGLTEFLPI), 39 to 59 (AGLFLDTMLHIGTLLAVFIYY), 71 to 91 (FSKLMLLLIVGTIPAVVIGLL), 99 to 119 (ISKTGITIGWEFLVTGFFLYM), 133 to 153 (ITYKDAFIIGSFQAAAIFPAI), 174 to 194 (AYFSFLLSTPAIVGAIILQFV), 208 to 228 (SLIVGTLSAAFFGYIAVSWMI), and 239 to 259 (FAYYVWGLGILILTLQFTDVF).

This sequence belongs to the UppP family.

The protein resides in the cell membrane. It carries out the reaction di-trans,octa-cis-undecaprenyl diphosphate + H2O = di-trans,octa-cis-undecaprenyl phosphate + phosphate + H(+). Its function is as follows. Catalyzes the dephosphorylation of undecaprenyl diphosphate (UPP). Confers resistance to bacitracin. This is Undecaprenyl-diphosphatase 4 from Bacillus cereus (strain ZK / E33L).